A 522-amino-acid polypeptide reads, in one-letter code: 2-isopropylmalate synthase (522 aa).

The region spanning 5–267 (VIIFDTTLRD…ETGINAKEIH (263 aa)) is the Pyruvate carboxyltransferase domain. Mn(2+)-binding residues include Asp14, His202, His204, and Asn238. Residues 392–522 (QLQQLVVQSD…MHKNRELGGV (131 aa)) form a regulatory domain region.

It belongs to the alpha-IPM synthase/homocitrate synthase family. LeuA type 1 subfamily. As to quaternary structure, homodimer. It depends on Mn(2+) as a cofactor.

Its subcellular location is the cytoplasm. It catalyses the reaction 3-methyl-2-oxobutanoate + acetyl-CoA + H2O = (2S)-2-isopropylmalate + CoA + H(+). The protein operates within amino-acid biosynthesis; L-leucine biosynthesis; L-leucine from 3-methyl-2-oxobutanoate: step 1/4. Functionally, catalyzes the condensation of the acetyl group of acetyl-CoA with 3-methyl-2-oxobutanoate (2-ketoisovalerate) to form 3-carboxy-3-hydroxy-4-methylpentanoate (2-isopropylmalate). The chain is 2-isopropylmalate synthase from Shewanella sp. (strain MR-7).